A 474-amino-acid chain; its full sequence is GTPase Der (474 aa).

2 EngA-type G domains span residues 2-166 (LRIA…NVPE) and 212-385 (LKIA…TTVS). Residues 8–15 (GRPNVGKS), 55–59 (DTGGV), 118–121 (NKAD), 218–225 (GRPNVGKS), 265–269 (DTAGL), and 330–333 (NKWD) contribute to the GTP site. The KH-like domain maps to 386-470 (SKVPTPVVNK…PFDLEFKEKT (85 aa)).

It belongs to the TRAFAC class TrmE-Era-EngA-EngB-Septin-like GTPase superfamily. EngA (Der) GTPase family. Associates with the 50S ribosomal subunit.

In terms of biological role, GTPase that plays an essential role in the late steps of ribosome biogenesis. The chain is GTPase Der from Chlamydia abortus (strain DSM 27085 / S26/3) (Chlamydophila abortus).